A 104-amino-acid chain; its full sequence is Protein METHYLENE BLUE SENSITIVITY 2 (104 aa).

Over residues 1–11 (MTGKAKPKKHT) the composition is skewed to basic residues. Disordered stretches follow at residues 1-46 (MTGK…GHAK) and 64-104 (IHHE…SLKK). 2 stretches are compositionally biased toward basic and acidic residues: residues 36-46 (RTGKEKGGHAK) and 73-82 (LTYEEPRNLH).

It localises to the nucleus. The protein resides in the cytoplasm. The protein localises to the stress granule. Required for acclimation to reactive oxygen species (ROS) responses downstream of beta-cyclocitral, including singlet oxygen 1O(2) detoxification reactions, especially upon light-mediated photooxidative stress, and leading to programmed cell death. Prevents leaf senescence. This chain is Protein METHYLENE BLUE SENSITIVITY 2, found in Arabidopsis thaliana (Mouse-ear cress).